The chain runs to 345 residues: tRNA N6-adenosine threonylcarbamoyltransferase (345 aa).

2 residues coordinate Fe cation: His111 and His115. Residues 134–138 (LVSGG), Asp167, Gly180, Asp184, and Asn278 contribute to the substrate site. Asp306 lines the Fe cation pocket.

It belongs to the KAE1 / TsaD family. Fe(2+) serves as cofactor.

The protein localises to the cytoplasm. It carries out the reaction L-threonylcarbamoyladenylate + adenosine(37) in tRNA = N(6)-L-threonylcarbamoyladenosine(37) in tRNA + AMP + H(+). Functionally, required for the formation of a threonylcarbamoyl group on adenosine at position 37 (t(6)A37) in tRNAs that read codons beginning with adenine. Is involved in the transfer of the threonylcarbamoyl moiety of threonylcarbamoyl-AMP (TC-AMP) to the N6 group of A37, together with TsaE and TsaB. TsaD likely plays a direct catalytic role in this reaction. The polypeptide is tRNA N6-adenosine threonylcarbamoyltransferase (Cyanothece sp. (strain PCC 7425 / ATCC 29141)).